A 452-amino-acid polypeptide reads, in one-letter code: Caspase-2 (452 aa).

At Ala2 the chain carries N-acetylalanine. The propeptide occupies 2-169; sequence AASSGRSQSS…TMEHSLDNGD (168 aa). The 90-residue stretch at 32-121 folds into the CARD domain; sequence MHPDHQETLK…GHLEDLLLTT (90 aa). Ser157 carries the post-translational modification Phosphoserine. Catalysis depends on residues His277 and Cys320. The propeptide occupies 326–333; that stretch reads DRGVDQQD. Residues 327–336 show a composition bias toward basic and acidic residues; sequence RGVDQQDGKN. The segment at 327–349 is disordered; the sequence is RGVDQQDGKNHAQSPGCEESDAG. Phosphoserine is present on Ser340.

It belongs to the peptidase C14A family. Heterotetramer that consists of two anti-parallel arranged heterodimers, each one formed by a p18 subunit and a p12 subunit. Forms a complex named the PIDDosome with PIDD1 and CRADD. Interacts with NOL3 (via CARD domain); inhibits CASP2 activity in a phosphorylation-dependent manner. Post-translationally, the mature protease can process its own propeptide, but not that of other caspases.

It catalyses the reaction Strict requirement for an Asp residue at P1, with 316-Asp being essential for proteolytic activity and has a preferred cleavage sequence of Val-Asp-Val-Ala-Asp-|-.. Its function is as follows. Involved in the activation cascade of caspases responsible for apoptosis execution. Might function by either activating some proteins required for cell death or inactivating proteins necessary for cell survival. Associates with PIDD1 and CRADD to form the PIDDosome, a complex that activates CASP2 and triggers apoptosis in response to genotoxic stress. The protein is Caspase-2 (Casp2) of Rattus norvegicus (Rat).